The following is a 456-amino-acid chain: UDP-N-acetylmuramate--L-alanine ligase (456 aa).

Residue 117 to 123 participates in ATP binding; the sequence is GTHGKTT.

The protein belongs to the MurCDEF family.

The protein resides in the cytoplasm. It catalyses the reaction UDP-N-acetyl-alpha-D-muramate + L-alanine + ATP = UDP-N-acetyl-alpha-D-muramoyl-L-alanine + ADP + phosphate + H(+). Its pathway is cell wall biogenesis; peptidoglycan biosynthesis. Cell wall formation. The chain is UDP-N-acetylmuramate--L-alanine ligase from Clostridium tetani (strain Massachusetts / E88).